Reading from the N-terminus, the 305-residue chain is MSLRHFLTLSDLTKQELENLIKRASELRHMQHAGEIYQPFVGRTLGMIFEKSSTRTRISFETGMGQFGGSAIFLSPNDTQLGRGEPIEDSARVISSMVDIIMIRTFGHEKVETFAKYSSVPIINALTDEFHPCQLLADMQTYYEHRGSIENKIVTWVGDGNNMCASYMQAANQFGFELRVAAPYGFEPDPELMKRFSHCVSIVENVQEAAKDSHLIVTDVWASMGQESEQNTRARRFSSYQVTPSLLDKADSEVVFMHCLPAHRGEEISHDMLDDPRSVVWDEAENRLHAQKALMEFLLKDKIKI.

Carbamoyl phosphate contacts are provided by residues 53–56 (STRT), Gln80, Arg104, and 131–134 (HPCQ). L-ornithine is bound by residues Asn162, Asp219, and 223–224 (SM). Carbamoyl phosphate-binding positions include 259–260 (CL) and Arg287.

Belongs to the aspartate/ornithine carbamoyltransferase superfamily. OTCase family.

The protein resides in the cytoplasm. The enzyme catalyses carbamoyl phosphate + L-ornithine = L-citrulline + phosphate + H(+). Its pathway is amino-acid biosynthesis; L-arginine biosynthesis; L-arginine from L-ornithine and carbamoyl phosphate: step 1/3. Functionally, reversibly catalyzes the transfer of the carbamoyl group from carbamoyl phosphate (CP) to the N(epsilon) atom of ornithine (ORN) to produce L-citrulline. This chain is Ornithine carbamoyltransferase, found in Psychrobacter cryohalolentis (strain ATCC BAA-1226 / DSM 17306 / VKM B-2378 / K5).